The primary structure comprises 331 residues: Tryptophan--tRNA ligase 1 (331 aa).

ATP-binding positions include 9–11 (KPT) and 17–18 (GN). Residues 10–18 (PTGHLTLGN) carry the 'HIGH' region motif. L-tryptophan is bound at residue D137. Residues 149–151 (GDD), V188, and 197–201 (KMGKS) contribute to the ATP site. Residues 197 to 201 (KMGKS) carry the 'KMSKS' region motif.

The protein belongs to the class-I aminoacyl-tRNA synthetase family. Homodimer.

Its subcellular location is the cytoplasm. The catalysed reaction is tRNA(Trp) + L-tryptophan + ATP = L-tryptophyl-tRNA(Trp) + AMP + diphosphate + H(+). Catalyzes the attachment of tryptophan to tRNA(Trp). This is Tryptophan--tRNA ligase 1 from Streptomyces avermitilis (strain ATCC 31267 / DSM 46492 / JCM 5070 / NBRC 14893 / NCIMB 12804 / NRRL 8165 / MA-4680).